The sequence spans 323 residues: DNA repair and recombination protein RadA (323 aa).

115–122 (GEFGSGKT) contacts ATP.

The protein belongs to the eukaryotic RecA-like protein family.

Involved in DNA repair and in homologous recombination. Binds and assemble on single-stranded DNA to form a nucleoprotein filament. Hydrolyzes ATP in a ssDNA-dependent manner and promotes DNA strand exchange between homologous DNA molecules. The chain is DNA repair and recombination protein RadA from Thermoplasma volcanium (strain ATCC 51530 / DSM 4299 / JCM 9571 / NBRC 15438 / GSS1).